A 372-amino-acid chain; its full sequence is DNA replication and repair protein RecF (372 aa).

An ATP-binding site is contributed by 30 to 37 (GENAQGKT).

This sequence belongs to the RecF family.

It localises to the cytoplasm. The RecF protein is involved in DNA metabolism; it is required for DNA replication and normal SOS inducibility. RecF binds preferentially to single-stranded, linear DNA. It also seems to bind ATP. The polypeptide is DNA replication and repair protein RecF (Geobacillus kaustophilus (strain HTA426)).